A 226-amino-acid polypeptide reads, in one-letter code: PKHD-type hydroxylase mma_3620 (226 aa).

A Fe2OG dioxygenase domain is found at 78–178 (RYMPPLFNRY…RVCSFFWLQS (101 aa)). 3 residues coordinate Fe cation: H96, D98, and H159. A 2-oxoglutarate-binding site is contributed by R169.

Fe(2+) serves as cofactor. L-ascorbate is required as a cofactor.

This is PKHD-type hydroxylase mma_3620 from Janthinobacterium sp. (strain Marseille) (Minibacterium massiliensis).